Reading from the N-terminus, the 755-residue chain is MTTTPKEREPKVKVSVDIDPVPTSFEKWAKPGHFDRSLARGPKTTTWIWNLHALAHDFDSHTSDLEDVSRKIFSAHFGHLAVVFVWLSGMYYHGAQFSNYSAWLADPINIKPSAQVVWPIFGQEILNGDVGGGFEGIRITSGLFHLWRAAGITNEFQLLCTAIGGLVMAGLCLFAGWFHYHKRAPKLEWFQNVESMLNHHLAGLLGLGSLAWAGHQIHVAIPINKMLDAGVPAAQIPLPHEFILKPALMKEMFPSVDWGLFSGVVPFFTLDWGKYAEFLTFKGGLDPQTGALWLTDQAHHHLAIAVLFIVAGHMYRTNWGIGHSIKEILEAHKGPFTGEGHKGLYEVLTSSWHAQLAINLAMVGSLSIIVAQHMYAMNPYPYMGIDYATQISLFTHHMWIGGIFIVGGAAHGAIYMVRDYDPAVNRNNVLDRVIRHRDAIISHLNWVCLFLGFHAFGFYVHNDTMQALGRPQDMFSDTGIQLQPIFAQWIQSLHTKAIASTAPYVGASVSPIFGGDVVAVGGKVSMMPMVLGTADFMVHHIHAMTIHITVLILLKGVLFARSSRLIPDKAKLGFRFPCDGPGRGGTCQVSGWDHVFLGLFWMYNAISIVIFHFSWKMQSDIWGTVNPDGTIEHITGGNFATSAININGWLRDFLWAQSVQVINSYGSELSAYGLLFLGAHFVWAFSLMFLFSGRGYWQELIESIVWAHNKLKVAPAIQPRALSIIQGRAVGVAHYLLGGIVTTWAFFLARFAALG.

Transmembrane regions (helical) follow at residues 72–95 (IFSAHFGHLAVVFVWLSGMYYHGA), 158–181 (LLCTAIGGLVMAGLCLFAGWFHYH), 197–221 (LNHHLAGLLGLGSLAWAGHQIHVAI), 297–315 (QAHHHLAIAVLFIVAGHMY), 352–375 (WHAQLAINLAMVGSLSIIVAQHMY), 391–417 (ISLFTHHMWIGGIFIVGGAAHGAIYMV), 439–461 (AIISHLNWVCLFLGFHAFGFYVH), and 536–554 (FMVHHIHAMTIHITVLILL). Residues Cys-578 and Cys-587 each contribute to the [4Fe-4S] cluster site. The next 2 helical transmembrane spans lie at 594-615 (HVFLGLFWMYNAISIVIFHFSW) and 669-691 (LSAYGLLFLGAHFVWAFSLMFLF). His-680 serves as a coordination point for chlorophyll a'. Residues Met-688 and Tyr-696 each contribute to the chlorophyll a site. Trp-697 is a binding site for phylloquinone. A helical transmembrane segment spans residues 729–749 (AVGVAHYLLGGIVTTWAFFLA).

It belongs to the PsaA/PsaB family. In terms of assembly, the PsaA/B heterodimer binds the P700 chlorophyll special pair and subsequent electron acceptors. PSI consists of a core antenna complex that captures photons, and an electron transfer chain that converts photonic excitation into a charge separation. The cyanobacterial PSI reaction center is composed of one copy each of PsaA,B,C,D,E,F,I,J,K,L,M and X, and forms trimeric complexes. PSI electron transfer chain: 5 chlorophyll a, 1 chlorophyll a', 2 phylloquinones and 3 4Fe-4S clusters. PSI core antenna: 90 chlorophyll a, 22 carotenoids, 3 phospholipids and 1 galactolipid. P700 is a chlorophyll a/chlorophyll a' dimer, A0 is one or more chlorophyll a, A1 is one or both phylloquinones and FX is a shared 4Fe-4S iron-sulfur center. is required as a cofactor.

The protein localises to the cellular thylakoid membrane. It catalyses the reaction reduced [plastocyanin] + hnu + oxidized [2Fe-2S]-[ferredoxin] = oxidized [plastocyanin] + reduced [2Fe-2S]-[ferredoxin]. In terms of biological role, psaA and PsaB bind P700, the primary electron donor of photosystem I (PSI), as well as the electron acceptors A0, A1 and FX. PSI is a plastocyanin/cytochrome c6-ferredoxin oxidoreductase, converting photonic excitation into a charge separation, which transfers an electron from the donor P700 chlorophyll pair to the spectroscopically characterized acceptors A0, A1, FX, FA and FB in turn. Oxidized P700 is reduced on the lumenal side of the thylakoid membrane by plastocyanin or cytochrome c6. In Synechococcus sp. (strain JA-3-3Ab) (Cyanobacteria bacterium Yellowstone A-Prime), this protein is Photosystem I P700 chlorophyll a apoprotein A1.